A 573-amino-acid polypeptide reads, in one-letter code: NEDD4-binding protein 3-A (573 aa).

2 disordered regions span residues 168–216 (LNTM…INSL) and 382–407 (LRGESEELRQKQSQSDNSGPKLEDSK). 2 stretches are compositionally biased toward polar residues: residues 184–196 (QPSNSHSNNQSES) and 207–216 (DSRQNSINSL). Residues 289–539 (VEDVARQLEE…KEIQSSYREM (251 aa)) are a coiled coil.

This sequence belongs to the N4BP3 family.

The protein resides in the cytoplasmic vesicle. It localises to the cell projection. It is found in the axon. Its subcellular location is the dendrite. Its function is as follows. Plays a role in axon and dendrite arborization during cranial nerve development. Also important for neural crest migration and early development of other anterior structures including eye, brain and cranial cartilage. The sequence is that of NEDD4-binding protein 3-A from Xenopus laevis (African clawed frog).